Consider the following 819-residue polypeptide: Transferrin 2 (819 aa).

Residues 1–21 (MASSLVFVALVGALCFTLANA) form the signal peptide. In terms of domain architecture, Transferrin-like 1 spans 33 to 373 (MVWCTKSQAE…QYDQYRSERL (341 aa)). 2 cysteine pairs are disulfide-bonded: Cys36–Cys78 and Cys46–Cys69. Asn48 and Asn66 each carry an N-linked (GlcNAc...) asparagine glycan. The Fe(3+) site is built by Asp93 and Tyr121. 3 cysteine pairs are disulfide-bonded: Cys147/Cys237, Cys190/Cys213, and Cys273/Cys287. Residues Ala155 and Gly156 each coordinate hydrogencarbonate. The N-linked (GlcNAc...) asparagine glycan is linked to Asn187. Tyr231 serves as a coordination point for Fe(3+). Residues 325–361 (GTRDDQSRQGGQSFNSRNNINDQNAYGQFDNNDPYRT) form a disordered region. The span at 332–361 (RQGGQSFNSRNNINDQNAYGQFDNNDPYRT) shows a compositional bias: polar residues. N-linked (GlcNAc...) asparagine glycosylation occurs at Asn388. The Transferrin-like 2 domain occupies 450–796 (MTLCVTSENE…FMRARRITDC (347 aa)). 2 disulfide bridges follow: Cys453-Cys490 and Cys463-Cys481. Fe(3+) is bound by residues Asp505 and Tyr533. Intrachain disulfides connect Cys557–Cys646, Cys599–Cys621, Cys618–Cys629, and Cys687–Cys701. Hydrogencarbonate contacts are provided by Thr559, Ala565, and Gly566. A glycan (N-linked (GlcNAc...) asparagine) is linked at Asn720. The GPI-anchor amidated cysteine moiety is linked to residue Cys796. The propeptide at 797-819 (YAGASQLALSVGLLLVGSLVAML) is removed in mature form.

Belongs to the transferrin family. As to quaternary structure, forms a complex composed of septa junction proteins Nrx-IV/Nrx, Tsf2/MTf, Cont and Nrg during late embryogenesis.

The protein localises to the apicolateral cell membrane. Its subcellular location is the cell junction. It localises to the septate junction. Functionally, iron-binding protein and component of septate junctions that form the paracellular permeability barrier in epithelial tissues. In an iron-dependent manner, required for septate junction assembly during epithelial maturation in embryos and mature septa junctions stability. This Drosophila melanogaster (Fruit fly) protein is Transferrin 2.